The sequence spans 283 residues: 4-diphosphocytidyl-2-C-methyl-D-erythritol kinase (283 aa).

K10 is an active-site residue. 99 to 109 (PMGGGLGGGSS) is an ATP binding site. D141 is a catalytic residue.

This sequence belongs to the GHMP kinase family. IspE subfamily. Homodimer.

It carries out the reaction 4-CDP-2-C-methyl-D-erythritol + ATP = 4-CDP-2-C-methyl-D-erythritol 2-phosphate + ADP + H(+). It functions in the pathway isoprenoid biosynthesis; isopentenyl diphosphate biosynthesis via DXP pathway; isopentenyl diphosphate from 1-deoxy-D-xylulose 5-phosphate: step 3/6. Catalyzes the phosphorylation of the position 2 hydroxy group of 4-diphosphocytidyl-2C-methyl-D-erythritol. This Salmonella gallinarum (strain 287/91 / NCTC 13346) protein is 4-diphosphocytidyl-2-C-methyl-D-erythritol kinase.